The following is a 590-amino-acid chain: V-type ATP synthase alpha chain (590 aa).

G231–T238 contributes to the ATP binding site.

It belongs to the ATPase alpha/beta chains family.

It catalyses the reaction ATP + H2O + 4 H(+)(in) = ADP + phosphate + 5 H(+)(out). In terms of biological role, produces ATP from ADP in the presence of a proton gradient across the membrane. The V-type alpha chain is a catalytic subunit. In Clostridium botulinum (strain ATCC 19397 / Type A), this protein is V-type ATP synthase alpha chain.